The following is a 466-amino-acid chain: Dihydrolipoyl dehydrogenase 3 (466 aa).

Residues 33–42 (EGRSTLGGTC), lysine 51, and glycine 115 each bind FAD. A disulfide bond links cysteine 42 and cysteine 47. NAD(+) contacts are provided by residues 181-185 (GAGVI), glutamate 204, valine 238, and 271-274 (AIGR). Positions 313 and 321 each coordinate FAD. Residue histidine 445 is the Proton acceptor of the active site.

The protein belongs to the class-I pyridine nucleotide-disulfide oxidoreductase family. As to quaternary structure, homodimer. FAD is required as a cofactor.

It is found in the cytoplasm. It carries out the reaction N(6)-[(R)-dihydrolipoyl]-L-lysyl-[protein] + NAD(+) = N(6)-[(R)-lipoyl]-L-lysyl-[protein] + NADH + H(+). LPD-3 may substitute for lipoamide dehydrogenase of the 2-oxoglutarate dehydrogenase and pyruvate multienzyme complexes when the latter is inactive or missing. In Pseudomonas putida (Arthrobacter siderocapsulatus), this protein is Dihydrolipoyl dehydrogenase 3 (lpd3).